A 435-amino-acid chain; its full sequence is Fez family zinc finger protein 2 (435 aa).

The Engrailed homology 1 repressor signature appears at 27–42; it reads SLAFSIERIMAKTSEP. C2H2-type zinc fingers lie at residues 254 to 276, 282 to 304, 310 to 332, 338 to 360, 366 to 388, and 394 to 417; these read FTCEVCGKVFNAHYNLTRHMPVH, FVCKVCGKGFRQASTLCRHKIIH, HKCNQCGKAFNRSSTLNTHIRIH, FVCEFCGKGFHQKGNYKNHKLTH, YKCTICNKAFHQIYNLTFHMHTH, and FTCGTCGKGFCRNFDLKKHVRKLH.

It belongs to the krueppel C2H2-type zinc-finger protein family.

The protein resides in the nucleus. Functionally, transcription repressor. Component of the regulatory cascade that controls the development of dopaminergic (DA) and serotonergic (5HT) neurons. In Xenopus tropicalis (Western clawed frog), this protein is Fez family zinc finger protein 2 (fezf2).